We begin with the raw amino-acid sequence, 693 residues long: Golgin subfamily A member 6A (693 aa).

A coiled-coil region spans residues 14 to 611 (LEESRQNKLA…KLLELQELVL (598 aa)). Disordered stretches follow at residues 20-69 (NKLA…PGDS), 497-547 (LPGE…GTEQ), and 661-693 (NVEPAPGAAREGSPHDNPTVQQIVQLSPVMQDT). The segment covering 54 to 69 (SPETTTSGGCHSPGDS) has biased composition (polar residues). The span at 537–547 (LPKEKADGTEQ) shows a compositional bias: basic and acidic residues. The span at 676 to 693 (DNPTVQQIVQLSPVMQDT) shows a compositional bias: polar residues.

Belongs to the GOLGA6 family. Highly expressed in seminiferous tubes in testis. Highly expressed in spermatids, barely detectable in late pachytene spermatocytes, and not detectable in spermatogonia. Detected at intermediate levels in pancreas and lymph nodes, and at much lower levels in spleen, peripheral blood leukocytes, skeletal muscle, liver, lung, placenta, brain and heart.

The chain is Golgin subfamily A member 6A (GOLGA6A) from Homo sapiens (Human).